We begin with the raw amino-acid sequence, 73 residues long: uncharacterized protein (73 aa).

The helical transmembrane segment at 54–72 threads the bilayer; sequence VSFIVAPTVMQVQCLFFFI.

It is found in the membrane. This is an uncharacterized protein from Saccharomyces cerevisiae (strain ATCC 204508 / S288c) (Baker's yeast).